Consider the following 314-residue polypeptide: MKEVSQQKKELVNEITQRIKASRSVAIVDTAGIRTRQIQDIRGKNRGKINLKVIKKTLLFKALENLGDEKLSKLKENSGGQIALLTSDLEPTEIYKIIESTFQKTAPRGGEIAPEDIVIQPMTTGFPPGPMMTEFQKVGLQTGVEKGKIAIKKETVFVKKGETIPKDKAKILEMLEIKPLEVGLQLLGLYSEGVVYSKEVLSLTPERIANDMAAAFSQAKAIAKSSMFFVDEVLRDLLAEAKIKADALALAGQFITEDNVKDFLVRANVNAIILNNVLNKGSTQETPEEKKEEAKKEEKSPDESISEGLGALFQ.

A disordered region spans residues 281–314 (GSTQETPEEKKEEAKKEEKSPDESISEGLGALFQ). The span at 287-302 (PEEKKEEAKKEEKSPD) shows a compositional bias: basic and acidic residues.

This sequence belongs to the universal ribosomal protein uL10 family. In terms of assembly, part of the 50S ribosomal subunit. Forms part of the ribosomal stalk which helps the ribosome interact with GTP-bound translation factors. Forms a heptameric L10(L12)2(L12)2(L12)2 complex, where L10 forms an elongated spine to which the L12 dimers bind in a sequential fashion.

Its function is as follows. Forms part of the ribosomal stalk, playing a central role in the interaction of the ribosome with GTP-bound translation factors. This Thermoplasma acidophilum (strain ATCC 25905 / DSM 1728 / JCM 9062 / NBRC 15155 / AMRC-C165) protein is Large ribosomal subunit protein uL10.